We begin with the raw amino-acid sequence, 212 residues long: Large ribosomal subunit protein uL3 (212 aa).

Gln-153 is modified (N5-methylglutamine).

This sequence belongs to the universal ribosomal protein uL3 family. Part of the 50S ribosomal subunit. Forms a cluster with proteins L14 and L19. Post-translationally, methylated by PrmB.

In terms of biological role, one of the primary rRNA binding proteins, it binds directly near the 3'-end of the 23S rRNA, where it nucleates assembly of the 50S subunit. The chain is Large ribosomal subunit protein uL3 from Shewanella piezotolerans (strain WP3 / JCM 13877).